We begin with the raw amino-acid sequence, 844 residues long: Eukaryotic translation elongation factor 2 (844 aa).

The tr-type G domain maps to 17-348; it reads RNIRNMSVIA…MIAIHLPSPV (332 aa). Position 26–33 (26–33) interacts with GTP; that stretch reads AHVDHGKS. A phosphothreonine mark is found at T57 and T59. Residues 162–165 and 219–221 each bind GTP; these read NKMD and SGL. Residue H701 is modified to Diphthamide.

Belongs to the TRAFAC class translation factor GTPase superfamily. Classic translation factor GTPase family. EF-G/EF-2 subfamily. In terms of processing, phosphorylation by EF-2 kinase completely inactivates eEF2.

The protein localises to the cytoplasm. The catalysed reaction is GTP + H2O = GDP + phosphate + H(+). Catalyzes the GTP-dependent ribosomal translocation step during translation elongation. During this step, the ribosome changes from the pre-translocational (PRE) to the post-translocational (POST) state as the newly formed A-site-bound peptidyl-tRNA and P-site-bound deacylated tRNA move to the P and E sites, respectively. Catalyzes the coordinated movement of the two tRNA molecules, the mRNA and conformational changes in the ribosome. The polypeptide is Eukaryotic translation elongation factor 2 (Drosophila melanogaster (Fruit fly)).